A 519-amino-acid polypeptide reads, in one-letter code: Tachykinin-like peptides receptor 99D (519 aa).

Residues 1-100 are Extracellular-facing; sequence MENRSDFEAD…SFAFVVPWWR (100 aa). Asn3, Asn19, Asn22, and Asn61 each carry an N-linked (GlcNAc...) asparagine glycan. The chain crosses the membrane as a helical span at residues 101–123; sequence QVLWSILFGGMVIVATGGNLIVV. Residues 124-134 are Cytoplasmic-facing; it reads WIVMTTKRMRT. The chain crosses the membrane as a helical span at residues 135–155; the sequence is VTNYFIVNLSIADAMVSSLNV. Residues 156–175 are Extracellular-facing; it reads TFNYYYMLDSDWPFGEFYCK. The cysteines at positions 174 and 254 are disulfide-linked. Residues 176–197 form a helical membrane-spanning segment; sequence LSQFIAMLSICASVFTLMAISI. Topologically, residues 198–217 are cytoplasmic; that stretch reads DRYVAIIRPLQPRMSKRCNL. The chain crosses the membrane as a helical span at residues 218–238; sequence AIAAVIWLASTLISCPMMIIY. Residues 239–270 lie on the Extracellular side of the membrane; sequence RTEEVPVRGLSNRTVCYPEWPDGPTNHSTMES. Residues 271-292 traverse the membrane as a helical segment; that stretch reads LYNILIIILTYFLPIVSMTVTY. The Cytoplasmic portion of the chain corresponds to 293-324; sequence SRVGIELWGSKTIGECTPRQVENVRSKRRVVK. Residues 325-346 traverse the membrane as a helical segment; sequence MMIVVVLIFAICWLPFHSYFII. Over 347–361 the chain is Extracellular; it reads TSCYPAITEAPFIQE. A helical membrane pass occupies residues 362-384; it reads LYLAIYWLAMSNSMYNPIIYCWM. The Cytoplasmic portion of the chain corresponds to 385–519; it reads NSRFRYGFKM…STANTTQLLS (135 aa). Cys399 carries the S-palmitoyl cysteine lipid modification. Residues 444-519 are disordered; that stretch reads PSSPKSHRIS…STANTTQLLS (76 aa). Composition is skewed to polar residues over residues 454–465 and 487–499; these read HSGTGRSATLRN and SYQQ…WSGP. A compositionally biased stretch (low complexity) spans 500 to 519; it reads NSATAVTNSSSTANTTQLLS.

This sequence belongs to the G-protein coupled receptor 1 family. In terms of tissue distribution, during late embryogenesis (stages 11-15), expressed in the brain and in a specific subset of neurons in each neuromere of the developing ventral ganglion. Expressed in the cortex of the adult brain, which contains the neuronal cell bodies.

The protein localises to the cell membrane. In terms of biological role, receptor for tachykinin-like peptides. The chain is Tachykinin-like peptides receptor 99D (TkR99D) from Drosophila melanogaster (Fruit fly).